The chain runs to 678 residues: Inositol-trisphosphate 3-kinase C (678 aa).

Disordered regions lie at residues 26 to 128 and 151 to 300; these read LEAL…RRNS and DLQS…LDLS. Residues 44 to 58 are compositionally biased toward gly residues; it reads PGAGGPTGRPEGGGP. 2 stretches are compositionally biased toward basic and acidic residues: residues 61 to 76 and 107 to 116; these read WIEE…RTDL and EKPRQNKELD. S160 is subject to Phosphoserine. Composition is skewed to basic and acidic residues over residues 173-196 and 220-236; these read ELDR…DNLR and SGKE…HDTD. The Nuclear export signal motif lies at 318 to 326; sequence LCPVPRLII. The tract at residues 328 to 380 is disordered; sequence PETPEPEAQPVGPQSRIEGGTGGFSSASSFDESEDDLVAGGGGTSDPEDRAGS. Position 330 is a phosphothreonine (T330). A Phosphoserine modification is found at S398. ATP-binding positions include K426, 466–468, and D479; that span reads EDL. Residues K481, 502–508, and 529–536 contribute to the substrate site; these read RKDMYEK and KPRYMQWR. The tract at residues 504-512 is calmodulin-binding; the sequence is DMYEKMVAV. ATP-binding residues include K553 and D633. A substrate-binding site is contributed by K636.

The protein belongs to the inositol phosphokinase (IPK) family.

The protein resides in the nucleus. Its subcellular location is the cytoplasm. It carries out the reaction 1D-myo-inositol 1,4,5-trisphosphate + ATP = 1D-myo-inositol 1,3,4,5-tetrakisphosphate + ADP + H(+). Its activity is regulated as follows. Activated by calcium/calmodulin. Inhibited by high concentrations of the substrate Ins(1,2,4)P3, and allosterically activated by the product Ins(1,3,4,5)P4. In terms of biological role, catalyzes the phosphorylation of 1D-myo-inositol 1,4,5-trisphosphate (InsP3) into 1D-myo-inositol 1,3,4,5-tetrakisphosphate and participates to the regulation of calcium homeostasis. Can phosphorylate inositol 2,4,5-triphosphate to inositol 2,4,5,6-tetraphosphate. The sequence is that of Inositol-trisphosphate 3-kinase C (Itpkc) from Mus musculus (Mouse).